The chain runs to 394 residues: Acetate kinase (394 aa).

Residue Asn10 participates in Mg(2+) binding. Position 17 (Lys17) interacts with ATP. Residue Arg87 coordinates substrate. Residue Asp144 is the Proton donor/acceptor of the active site. Residues 204–208 (HLGNG), 279–281 (DMR), and 327–331 (GIGEN) each bind ATP. Residue Glu381 participates in Mg(2+) binding.

This sequence belongs to the acetokinase family. As to quaternary structure, homodimer. Requires Mg(2+) as cofactor. It depends on Mn(2+) as a cofactor.

Its subcellular location is the cytoplasm. The enzyme catalyses acetate + ATP = acetyl phosphate + ADP. It functions in the pathway metabolic intermediate biosynthesis; acetyl-CoA biosynthesis; acetyl-CoA from acetate: step 1/2. Its function is as follows. Catalyzes the formation of acetyl phosphate from acetate and ATP. Can also catalyze the reverse reaction. This is Acetate kinase from Ectopseudomonas mendocina (strain ymp) (Pseudomonas mendocina).